Reading from the N-terminus, the 613-residue chain is Penicillin-binding protein activator LpoA (613 aa).

A signal peptide spans 1–29 (MNSMLNFTHKRKSVSRLLAPVALAVILAG). A lipid anchor (N-palmitoyl cysteine) is attached at Cys30. A lipid anchor (S-diacylglycerol cysteine) is attached at Cys30.

Belongs to the LpoA family. As to quaternary structure, interacts with PBP1a.

It localises to the cell outer membrane. Its function is as follows. Regulator of peptidoglycan synthesis that is essential for the function of penicillin-binding protein 1A (PBP1a). The polypeptide is Penicillin-binding protein activator LpoA (Photobacterium profundum (strain SS9)).